A 377-amino-acid polypeptide reads, in one-letter code: Delta(12) fatty acid desaturase DES8.11 (377 aa).

Transmembrane regions (helical) follow at residues 55–75 (LIVAYVFYYLANTYIPLIPTP) and 79–99 (LAWPVYWFCQASILTGLWVIG). The Histidine box-1 motif lies at 100–104 (HECGH). A helical membrane pass occupies residues 112–132 (LIDDIVGFVLHSALLTPYFSW). The Histidine box-2 signature appears at 136-140 (HRNHH). The next 3 helical transmembrane spans lie at 174 to 194 (VFTLVFRLTLGFPLYLLTNIS), 220 to 240 (VLLSDFGLLAVFYAIKLLVAA), and 244 to 264 (AWVINMYAIPVLGVSVFFVLI). A Histidine box-3 motif is present at residues 310–314 (HVLHH).

Belongs to the fatty acid desaturase type 1 family.

The protein resides in the membrane. It participates in lipid metabolism; polyunsaturated fatty acid biosynthesis. Functionally, converts linoleic acid into a conjugated octadecatrienoic acid, probably calendic acid. The sequence is that of Delta(12) fatty acid desaturase DES8.11 from Calendula officinalis (Pot marigold).